Here is a 1166-residue protein sequence, read N- to C-terminus: ATP-dependent helicase/deoxyribonuclease subunit B (1166 aa).

Positions 1-278 (MGAEFLVGRS…LNLDITYKEL (278 aa)) constitute a UvrD-like helicase ATP-binding domain. Positions 10, 11, 14, 15, 16, 236, and 283 each coordinate ATP. One can recognise a UvrD-like helicase C-terminal domain in the interval 281-586 (TERHTKTPEL…TFSLIPPALD (306 aa)). 4 residues coordinate [4Fe-4S] cluster: Cys801, Cys1121, Cys1124, and Cys1130.

The protein belongs to the helicase family. AddB/RexB type 1 subfamily. As to quaternary structure, heterodimer of AddA and AddB. The cofactor is At low magnesium concentrations there is no nuclease activity, but helicase activity is unaffected.. It depends on Mg(2+) as a cofactor. [4Fe-4S] cluster is required as a cofactor.

Its function is as follows. The heterodimer acts both as a highly processive, ATP-dependent DNA helicase and as an ATP-dependent single-stranded exonuclease, acting in both directions. Recognizes the B.subtilis Chi site (5'-AGCGG-3') which transforms the enzyme from a helicase which degrades both DNA strands to one with only 5' to 3' exonuclease activity. This generates a double-stranded DNA with a protruding 3'-terminated single-stranded tail suitable for the initiation of homologous recombination (Chi fragment). The AddB nuclease domain is not required for Chi fragment generation but for recognition of the Chi site; this subunit has 5' -&gt; 3' nuclease activity but no helicase activity. The helicase activity of isolated AddA acts on 3'-tailed substrate and requires AddB to bind to blunt-ended DNA. RecA thread formation during DNA double-strand break repair requires RecJ or AddAB. In Bacillus subtilis (strain 168), this protein is ATP-dependent helicase/deoxyribonuclease subunit B.